The following is a 182-amino-acid chain: Cytidylate kinase (182 aa).

7 to 15 (GLPGSGTTS) lines the ATP pocket.

Belongs to the cytidylate kinase family. Type 2 subfamily.

Its subcellular location is the cytoplasm. The enzyme catalyses CMP + ATP = CDP + ADP. It carries out the reaction dCMP + ATP = dCDP + ADP. The polypeptide is Cytidylate kinase (Methanoregula boonei (strain DSM 21154 / JCM 14090 / 6A8)).